A 167-amino-acid chain; its full sequence is Ureidoglycolate lyase (167 aa).

The protein belongs to the ureidoglycolate lyase family. In terms of assembly, homodimer. Requires Ni(2+) as cofactor.

It catalyses the reaction (S)-ureidoglycolate = urea + glyoxylate. Its pathway is nitrogen metabolism; (S)-allantoin degradation. Catalyzes the catabolism of the allantoin degradation intermediate (S)-ureidoglycolate, generating urea and glyoxylate. Involved in the utilization of allantoin as nitrogen source. The protein is Ureidoglycolate lyase of Pseudomonas putida (strain W619).